Reading from the N-terminus, the 207-residue chain is Guanylate kinase (207 aa).

The Guanylate kinase-like domain maps to 5–183; it reads GTLYIISAPS…ALYELEAIVE (179 aa). 12–19 is a binding site for ATP; sequence APSGAGKT.

It belongs to the guanylate kinase family.

The protein resides in the cytoplasm. The catalysed reaction is GMP + ATP = GDP + ADP. In terms of biological role, essential for recycling GMP and indirectly, cGMP. This chain is Guanylate kinase, found in Alcanivorax borkumensis (strain ATCC 700651 / DSM 11573 / NCIMB 13689 / SK2).